The chain runs to 303 residues: Probable 5-dehydro-4-deoxyglucarate dehydratase (303 aa).

The protein belongs to the DapA family.

It catalyses the reaction 5-dehydro-4-deoxy-D-glucarate + H(+) = 2,5-dioxopentanoate + CO2 + H2O. It functions in the pathway carbohydrate acid metabolism; D-glucarate degradation; 2,5-dioxopentanoate from D-glucarate: step 2/2. The chain is Probable 5-dehydro-4-deoxyglucarate dehydratase from Leptothrix cholodnii (strain ATCC 51168 / LMG 8142 / SP-6) (Leptothrix discophora (strain SP-6)).